Consider the following 276-residue polypeptide: Small ribosomal subunit protein uS2 (276 aa).

The segment at 254–276 (LAGATAAAPAEGAVATETTPTEG) is disordered. Over residues 255–276 (AGATAAAPAEGAVATETTPTEG) the composition is skewed to low complexity.

Belongs to the universal ribosomal protein uS2 family.

The sequence is that of Small ribosomal subunit protein uS2 from Mycobacterium ulcerans (strain Agy99).